The following is a 312-amino-acid chain: tRNA pseudouridine synthase B (312 aa).

Aspartate 37 serves as the catalytic Nucleophile.

Belongs to the pseudouridine synthase TruB family. Type 1 subfamily.

The enzyme catalyses uridine(55) in tRNA = pseudouridine(55) in tRNA. Responsible for synthesis of pseudouridine from uracil-55 in the psi GC loop of transfer RNAs. In Thermus thermophilus (strain ATCC BAA-163 / DSM 7039 / HB27), this protein is tRNA pseudouridine synthase B.